Reading from the N-terminus, the 255-residue chain is Large ribosomal subunit protein uL2 (255 aa).

The tract at residues 201–229 is disordered; it reads YAHPHGGGSHQQGGTPVKKNAPPGQKVGF.

The protein belongs to the universal ribosomal protein uL2 family. As to quaternary structure, part of the 50S ribosomal subunit. Forms a bridge to the 30S subunit in the 70S ribosome.

Its function is as follows. One of the primary rRNA binding proteins. Required for association of the 30S and 50S subunits to form the 70S ribosome, for tRNA binding and peptide bond formation. It has been suggested to have peptidyltransferase activity; this is somewhat controversial. Makes several contacts with the 16S rRNA in the 70S ribosome. This Caldivirga maquilingensis (strain ATCC 700844 / DSM 13496 / JCM 10307 / IC-167) protein is Large ribosomal subunit protein uL2.